A 371-amino-acid chain; its full sequence is Chaperone protein DnaJ (371 aa).

One can recognise a J domain in the interval 5 to 70; sequence CYYEILNVSK…SKRSRYDQFG (66 aa). The segment at 127 to 204 adopts a CR-type zinc-finger fold; that stretch reads GVEKEITIPR…CYGNGKVKKQ (78 aa). Residues Cys-140, Cys-143, Cys-156, Cys-159, Cys-178, Cys-181, Cys-192, and Cys-195 each contribute to the Zn(2+) site. CXXCXGXG motif repeat units lie at residues 140–147, 156–163, 178–185, and 192–199; these read CDSCDGTG, CHACHGQG, CPVCNGTG, and CDACYGNG.

This sequence belongs to the DnaJ family. Homodimer. The cofactor is Zn(2+).

Its subcellular location is the cytoplasm. In terms of biological role, participates actively in the response to hyperosmotic and heat shock by preventing the aggregation of stress-denatured proteins and by disaggregating proteins, also in an autonomous, DnaK-independent fashion. Unfolded proteins bind initially to DnaJ; upon interaction with the DnaJ-bound protein, DnaK hydrolyzes its bound ATP, resulting in the formation of a stable complex. GrpE releases ADP from DnaK; ATP binding to DnaK triggers the release of the substrate protein, thus completing the reaction cycle. Several rounds of ATP-dependent interactions between DnaJ, DnaK and GrpE are required for fully efficient folding. Also involved, together with DnaK and GrpE, in the DNA replication of plasmids through activation of initiation proteins. The chain is Chaperone protein DnaJ from Francisella tularensis subsp. tularensis (strain WY96-3418).